The chain runs to 668 residues: Acetoin catabolism regulatory protein (668 aa).

A Sigma-54 factor interaction domain is found at 341–570 (LTGGDAALQL…NVLEYARAVC (230 aa)). Residues 369-376 (GETGSGKE) and 433-442 (ADGGTLFLDE) contribute to the ATP site. Residues 586–606 (GPAPSAALPQPGPAQSPAAAP) are compositionally biased toward low complexity. Positions 586-611 (GPAPSAALPQPGPAQSPAAAPFDPHQ) are disordered. Residues 630 to 649 (LSAVARQIGVSRMTLYRRME) constitute a DNA-binding region (H-T-H motif).

Required for sigma-54-dependent transcription of acoXABC. The chain is Acetoin catabolism regulatory protein (acoR) from Cupriavidus necator (strain ATCC 17699 / DSM 428 / KCTC 22496 / NCIMB 10442 / H16 / Stanier 337) (Ralstonia eutropha).